The following is a 188-amino-acid chain: Archaemetzincin (188 aa).

A Zn(2+)-binding site is contributed by histidine 137. Glutamate 138 acts as the Proton acceptor in catalysis. Residues histidine 141, histidine 147, cysteine 148, cysteine 153, cysteine 172, and cysteine 175 each contribute to the Zn(2+) site.

Belongs to the peptidase M54 family. As to quaternary structure, monomer. It depends on Zn(2+) as a cofactor.

Probable zinc metalloprotease whose natural substrate is unknown. The chain is Archaemetzincin from Pyrococcus horikoshii (strain ATCC 700860 / DSM 12428 / JCM 9974 / NBRC 100139 / OT-3).